The primary structure comprises 108 residues: T-cell acute lymphocytic leukemia protein 2 homolog (108 aa).

Residues 2-54 (TRKIFTNTRERWRQQSVNNAFAKLRKLIPTHPPDKKLSKNETLRLAMRYINFL) enclose the bHLH domain. A disordered region spans residues 76 to 108 (GLFPPKTRLPDEDDRTLLNDYRVPSPGPSHGAP).

This chain is T-cell acute lymphocytic leukemia protein 2 homolog (Tal2), found in Mus musculus (Mouse).